The chain runs to 189 residues: Leucine repeat adapter protein 25 (189 aa).

Ser-28 is subject to Phosphoserine. A disordered region spans residues 54-82 (ELSRAARAPDGPRHAAGSANSGSAAGPRR). The segment covering 68–79 (AAGSANSGSAAG) has biased composition (low complexity). An LRR repeat occupies 86–114 (LDSALAALRKEMVGLRQLDMSLLCQLWGL). Residues 136–175 (SSLHSDSSYPPDAGLSDDEEPPDASLPPDPPPLTVPQTHN) form a disordered region. Positions 159-169 (ASLPPDPPPLT) are enriched in pro residues. Phosphoserine is present on Ser-188.

The protein belongs to the FAM89 family. Interacts with SKI. Interacts (via LRR repeat) with CDC42BPA (via AGC-kinase C-terminal domain), CDC42BPB (via AGC-kinase C-terminal domain) and LIMK1 (via LIM zinc-binding domains). Forms a tripartite complex with CDC42BPA, CDC42BPB and LIMK1. As to quaternary structure, (Microbial infection) Interacts with mouse mammary tumor virus (MMTV) envelope glycoprotein gp70. As to expression, widely expressed. Expressed in the early postnatal brain.

It is found in the cytoplasm. The protein localises to the cell projection. It localises to the lamellipodium. The protein resides in the cell surface. Its function is as follows. Negatively regulates TGF-beta-induced signaling; in cooperation with SKI prevents the translocation of SMAD2 from the nucleus to the cytoplasm in response to TGF-beta. Acts as an adapter that mediates the specific recognition of LIMK1 by CDC42BPA and CDC42BPB in the lamellipodia. LRAP25-mediated CDC42BPA/CDC42BPB targeting to LIMK1 and the lamellipodium results in LIMK1 activation and the subsequent phosphorylation of CFL1 which is important for lamellipodial F-actin regulation. Functionally, (Microbial infection) May be a receptor for mouse mammary tumor virus (MMTV). In Mus musculus (Mouse), this protein is Leucine repeat adapter protein 25.